The chain runs to 126 residues: Small ribosomal subunit protein bS6 (126 aa).

The segment at 104-126 is disordered; that stretch reads QGAEKGKSSSKKVAAEAEASEEA.

The protein belongs to the bacterial ribosomal protein bS6 family.

Binds together with bS18 to 16S ribosomal RNA. This chain is Small ribosomal subunit protein bS6, found in Coxiella burnetii (strain Dugway 5J108-111).